A 237-amino-acid polypeptide reads, in one-letter code: ATP-dependent dethiobiotin synthetase BioD (237 aa).

12–17 (DAGKTL) is a binding site for ATP. Position 16 (Thr-16) interacts with Mg(2+). Lys-37 is an active-site residue. Ser-41 provides a ligand contact to substrate. Residues Asp-54, 116–119 (EGAG), and 213–215 (PRL) contribute to the ATP site. 2 residues coordinate Mg(2+): Asp-54 and Glu-116.

It belongs to the dethiobiotin synthetase family. As to quaternary structure, homodimer. Mg(2+) is required as a cofactor.

It localises to the cytoplasm. It carries out the reaction (7R,8S)-7,8-diammoniononanoate + CO2 + ATP = (4R,5S)-dethiobiotin + ADP + phosphate + 3 H(+). The protein operates within cofactor biosynthesis; biotin biosynthesis; biotin from 7,8-diaminononanoate: step 1/2. In terms of biological role, catalyzes a mechanistically unusual reaction, the ATP-dependent insertion of CO2 between the N7 and N8 nitrogen atoms of 7,8-diaminopelargonic acid (DAPA, also called 7,8-diammoniononanoate) to form a ureido ring. The polypeptide is ATP-dependent dethiobiotin synthetase BioD (Chromohalobacter salexigens (strain ATCC BAA-138 / DSM 3043 / CIP 106854 / NCIMB 13768 / 1H11)).